The following is a 324-amino-acid chain: Endochitinase A2 (324 aa).

The first 20 residues, 1–20 (MSKLRIPILLVLFIVSCCSA), serve as a signal peptide directing secretion. Positions 21-61 (EQCGTQAGGALCPGGLCCSKFGWCGSTSEYCGDGCQSQCSG) constitute a Chitin-binding type-1 domain. 4 cysteine pairs are disulfide-bonded: cysteine 23–cysteine 38, cysteine 32–cysteine 44, cysteine 37–cysteine 51, and cysteine 55–cysteine 59. The Proton donor role is filled by glutamate 133. Disulfide bonds link cysteine 151–cysteine 170 and cysteine 269–cysteine 301. Positions 310-324 (SLPLSSILLDTVAAA) are cleaved as a propeptide — removed in mature form.

It belongs to the glycosyl hydrolase 19 family. Chitinase class I subfamily.

It carries out the reaction Random endo-hydrolysis of N-acetyl-beta-D-glucosaminide (1-&gt;4)-beta-linkages in chitin and chitodextrins.. In terms of biological role, defense against chitin-containing fungal pathogens. The polypeptide is Endochitinase A2 (CHI2) (Pisum sativum (Garden pea)).